Here is a 544-residue protein sequence, read N- to C-terminus: Ceramide glucosyltransferase (544 aa).

Over 1–15 (MVQEELSLFRITTGY) the chain is Lumenal. A helical transmembrane segment spans residues 16 to 36 (FFLLWYIIILVAAYSGFFEIL). Residues 37-427 (FNFRNRPILH…LATLIEPTTE (391 aa)) lie on the Cytoplasmic side of the membrane. Residue aspartate 109 is a short sequence motif, D1. Aspartate 171 is a short sequence motif (D2). A short sequence motif (D3) is located at residue aspartate 364. Aspartate 364 functions as the Proton acceptor in the catalytic mechanism. Residues 404–408 (RRVRW) carry the (Q/R)XXRW motif. Residues 428–448 (SIICGIYGTYAISTVFFGTWF) traverse the membrane as a helical segment. Over 449–451 (NKY) the chain is Lumenal. A helical transmembrane segment spans residues 452-472 (WFVMHMLIWMLTDYVQYHTLI). Residues 473 to 501 (NHTLDVKNITYLPNWLNESIPPKQRNCLQ) are Cytoplasmic-facing. A helical membrane pass occupies residues 502 to 522 (WGYIWILRELLALPIWIIAMI). At 523–544 (GHEIDWRGRPFRIKKDLTAEEM) the chain is on the lumenal side.

Belongs to the glycosyltransferase 2 family.

It is found in the golgi apparatus membrane. It catalyses the reaction an N-acylsphing-4-enine + UDP-alpha-D-glucose = a beta-D-glucosyl-(1&lt;-&gt;1')-N-acylsphing-4-enine + UDP + H(+). Its pathway is lipid metabolism; sphingolipid metabolism. Catalyzes the final step in the biosynthesis of the membrane lipid glucosylceramide (GluCer), the transfer of glucose to ceramide. Glucosylceramides play important roles in growth, differentiation and pathogenicity. This chain is Ceramide glucosyltransferase, found in Candida albicans (strain SC5314 / ATCC MYA-2876) (Yeast).